The following is a 301-amino-acid chain: Probable aspartoacylase (301 aa).

The Zn(2+) site is built by His-13 and Glu-16. Substrate contacts are provided by residues Arg-54 and 61-62 (NR). His-105 contacts Zn(2+). The substrate site is built by Glu-163 and Tyr-273.

This sequence belongs to the AspA/AstE family. Aspartoacylase subfamily. Zn(2+) is required as a cofactor.

The catalysed reaction is an N-acyl-L-aspartate + H2O = a carboxylate + L-aspartate. The protein is Probable aspartoacylase of Prochlorococcus marinus (strain MIT 9301).